The primary structure comprises 1374 residues: Serine/threonine-protein kinase LMTK1 (1374 aa).

Residues leucine 32–cysteine 52 form a helical membrane-spanning segment. A Protein kinase domain is found at leucine 125 to leucine 395. ATP is bound by residues isoleucine 131 to valine 139 and lysine 156. The active-site Proton acceptor is aspartate 253. A Phosphoserine modification is found at serine 495. 5 disordered regions span residues glycine 542–glycine 622, valine 667–leucine 731, tryptophan 765–proline 1195, glutamine 1245–aspartate 1302, and alanine 1320–alanine 1374. Over residues proline 606–alanine 620 the composition is skewed to low complexity. Residues serine 680–serine 690 are compositionally biased toward polar residues. Low complexity-rich tracts occupy residues proline 719–leucine 731, serine 801–threonine 831, and serine 847–proline 856. Residues glutamate 865–glycine 878 show a composition bias toward polar residues. Residues proline 900–aspartate 914 are compositionally biased toward low complexity. Polar residues predominate over residues arginine 978–asparagine 987. Phosphoserine is present on serine 1029. Residues glutamate 1063–proline 1073 are compositionally biased toward polar residues. A compositionally biased stretch (low complexity) spans threonine 1138–glutamate 1155. Residues proline 1158–glutamate 1173 are compositionally biased toward acidic residues. Residues serine 1168, serine 1171, serine 1184, serine 1187, and serine 1262 each carry the phosphoserine modification. The span at glycine 1272 to threonine 1291 shows a compositional bias: polar residues. Residues alanine 1321 to alanine 1332 are compositionally biased toward pro residues. Residues phenylalanine 1337–valine 1352 are compositionally biased toward polar residues. A compositionally biased stretch (basic and acidic residues) spans serine 1353–proline 1363. The segment covering alanine 1365 to alanine 1374 has biased composition (gly residues).

The protein belongs to the protein kinase superfamily. Tyr protein kinase family. As to quaternary structure, interacts with CDK5. In terms of processing, autophosphorylated. Phosphorylated by CDK5. As to expression, expressed in brain.

It is found in the membrane. Its subcellular location is the cytoplasm. The protein resides in the perinuclear region. The catalysed reaction is L-seryl-[protein] + ATP = O-phospho-L-seryl-[protein] + ADP + H(+). The enzyme catalyses L-threonyl-[protein] + ATP = O-phospho-L-threonyl-[protein] + ADP + H(+). In terms of biological role, may be involved in neuronal differentiation. The sequence is that of Serine/threonine-protein kinase LMTK1 (AATK) from Homo sapiens (Human).